Consider the following 282-residue polypeptide: Energy-coupling factor transporter ATP-binding protein EcfA1 (282 aa).

An ABC transporter domain is found at 6 to 243 (VTVKHLSFTY…EVLIKSAGLE (238 aa)). 40–47 (GHNGSGKS) contributes to the ATP binding site.

The protein belongs to the ABC transporter superfamily. Energy-coupling factor EcfA family. In terms of assembly, forms a stable energy-coupling factor (ECF) transporter complex composed of 2 membrane-embedded substrate-binding proteins (S component), 2 ATP-binding proteins (A component) and 2 transmembrane proteins (T component).

The protein resides in the cell membrane. ATP-binding (A) component of a common energy-coupling factor (ECF) ABC-transporter complex. Unlike classic ABC transporters this ECF transporter provides the energy necessary to transport a number of different substrates. This is Energy-coupling factor transporter ATP-binding protein EcfA1 from Lactobacillus johnsonii (strain CNCM I-12250 / La1 / NCC 533).